Here is a 101-residue protein sequence, read N- to C-terminus: Small ribosomal subunit protein uS14 (101 aa).

The protein belongs to the universal ribosomal protein uS14 family. As to quaternary structure, part of the 30S ribosomal subunit. Contacts proteins S3 and S10.

In terms of biological role, binds 16S rRNA, required for the assembly of 30S particles and may also be responsible for determining the conformation of the 16S rRNA at the A site. In Pseudoalteromonas translucida (strain TAC 125), this protein is Small ribosomal subunit protein uS14.